The following is a 151-amino-acid chain: Small ribosomal subunit protein uS11 (151 aa).

S16 is subject to Phosphoserine. Glycyl lysine isopeptide (Lys-Gly) (interchain with G-Cter in SUMO2) cross-links involve residues K61, K63, and K106. The disordered stretch occupies residues 131–151 (DVTPIPSDSTRRKGGRRGRRL). A Phosphothreonine modification is found at T133. S139 carries the phosphoserine modification. Basic residues predominate over residues 142 to 151 (RKGGRRGRRL).

This sequence belongs to the universal ribosomal protein uS11 family. Component of the small ribosomal subunit. Part of the small subunit (SSU) processome, composed of more than 70 proteins and the RNA chaperone small nucleolar RNA (snoRNA) U3.

It is found in the cytoplasm. The protein localises to the nucleus. It localises to the nucleolus. Component of the small ribosomal subunit. The ribosome is a large ribonucleoprotein complex responsible for the synthesis of proteins in the cell. Part of the small subunit (SSU) processome, first precursor of the small eukaryotic ribosomal subunit. During the assembly of the SSU processome in the nucleolus, many ribosome biogenesis factors, an RNA chaperone and ribosomal proteins associate with the nascent pre-rRNA and work in concert to generate RNA folding, modifications, rearrangements and cleavage as well as targeted degradation of pre-ribosomal RNA by the RNA exosome. The polypeptide is Small ribosomal subunit protein uS11 (Rps14) (Mus musculus (Mouse)).